Here is a 406-residue protein sequence, read N- to C-terminus: Bifunctional enzyme IspD/IspF (406 aa).

The tract at residues Met-1–Thr-247 is 2-C-methyl-D-erythritol 4-phosphate cytidylyltransferase. The 2-C-methyl-D-erythritol 2,4-cyclodiphosphate synthase stretch occupies residues Phe-248–Leu-406. Positions 254 and 256 each coordinate a divalent metal cation. Residues Asp-254–His-256 and His-280–Ser-281 contribute to the 4-CDP-2-C-methyl-D-erythritol 2-phosphate site. Position 288 (His-288) interacts with a divalent metal cation. Residues Asp-302–Gly-304, Phe-307–Asp-311, Thr-378–Glu-381, Phe-385, and Lys-388 contribute to the 4-CDP-2-C-methyl-D-erythritol 2-phosphate site.

It in the N-terminal section; belongs to the IspD/TarI cytidylyltransferase family. IspD subfamily. The protein in the C-terminal section; belongs to the IspF family. A divalent metal cation serves as cofactor.

It carries out the reaction 2-C-methyl-D-erythritol 4-phosphate + CTP + H(+) = 4-CDP-2-C-methyl-D-erythritol + diphosphate. The catalysed reaction is 4-CDP-2-C-methyl-D-erythritol 2-phosphate = 2-C-methyl-D-erythritol 2,4-cyclic diphosphate + CMP. Its pathway is isoprenoid biosynthesis; isopentenyl diphosphate biosynthesis via DXP pathway; isopentenyl diphosphate from 1-deoxy-D-xylulose 5-phosphate: step 2/6. The protein operates within isoprenoid biosynthesis; isopentenyl diphosphate biosynthesis via DXP pathway; isopentenyl diphosphate from 1-deoxy-D-xylulose 5-phosphate: step 4/6. In terms of biological role, bifunctional enzyme that catalyzes the formation of 4-diphosphocytidyl-2-C-methyl-D-erythritol from CTP and 2-C-methyl-D-erythritol 4-phosphate (MEP) (IspD), and catalyzes the conversion of 4-diphosphocytidyl-2-C-methyl-D-erythritol 2-phosphate (CDP-ME2P) to 2-C-methyl-D-erythritol 2,4-cyclodiphosphate (ME-CPP) with a corresponding release of cytidine 5-monophosphate (CMP) (IspF). The protein is Bifunctional enzyme IspD/IspF of Helicobacter pylori (strain ATCC 700392 / 26695) (Campylobacter pylori).